We begin with the raw amino-acid sequence, 43 residues long: SPbeta prophage-derived uncharacterized protein YopG (43 aa).

The protein is SPbeta prophage-derived uncharacterized protein YopG (yopG) of Bacillus subtilis (strain 168).